The primary structure comprises 252 residues: Phosphoglycolate phosphatase (252 aa).

Asp13 acts as the Nucleophile in catalysis. 3 residues coordinate Mg(2+): Asp13, Asp15, and Asp192.

This sequence belongs to the HAD-like hydrolase superfamily. CbbY/CbbZ/Gph/YieH family. As to quaternary structure, monomer. The cofactor is Mg(2+). It depends on chloride as a cofactor.

It catalyses the reaction 2-phosphoglycolate + H2O = glycolate + phosphate. It participates in organic acid metabolism; glycolate biosynthesis; glycolate from 2-phosphoglycolate: step 1/1. Its function is as follows. Specifically catalyzes the dephosphorylation of 2-phosphoglycolate. Is involved in the dissimilation of the intracellular 2-phosphoglycolate formed during the DNA repair of 3'-phosphoglycolate ends, a major class of DNA lesions induced by oxidative stress. The chain is Phosphoglycolate phosphatase from Salmonella typhimurium (strain LT2 / SGSC1412 / ATCC 700720).